The chain runs to 261 residues: Indole-3-glycerol phosphate synthase (261 aa).

The protein belongs to the TrpC family.

The enzyme catalyses 1-(2-carboxyphenylamino)-1-deoxy-D-ribulose 5-phosphate + H(+) = (1S,2R)-1-C-(indol-3-yl)glycerol 3-phosphate + CO2 + H2O. Its pathway is amino-acid biosynthesis; L-tryptophan biosynthesis; L-tryptophan from chorismate: step 4/5. In Oceanobacillus iheyensis (strain DSM 14371 / CIP 107618 / JCM 11309 / KCTC 3954 / HTE831), this protein is Indole-3-glycerol phosphate synthase.